Reading from the N-terminus, the 322-residue chain is Beta-1,4-galactosyltransferase 7 (322 aa).

At 1-9 (MVNISTINW) the chain is on the cytoplasmic side. A helical; Signal-anchor for type II membrane protein transmembrane segment spans residues 10–30 (VFVCGLSFCLGGIAVLSLMPL). The Lumenal segment spans residues 31–322 (GSDCVCPLSN…TAAAASAVQT (292 aa)). UDP-alpha-D-galactose contacts are provided by Pro82, Arg84, Asp145, and Val146. Asp147 is a binding site for Mn(2+). UDP-alpha-D-galactose contacts are provided by Tyr177, Gly185, Trp207, and Gly208. Residue Leu209 coordinates beta-D-xylose. A UDP-alpha-D-galactose-binding site is contributed by Glu210. 2 residues coordinate beta-D-xylose: Asp211 and Asp212. A glycan (N-linked (GlcNAc...) asparagine) is linked at Asn236. Residues His241, His243, and Arg250 each contribute to the UDP-alpha-D-galactose site. Residues His241 and His243 each contribute to the Mn(2+) site. Cystine bridges form between Cys255–Cys310 and Cys300–Cys308.

Belongs to the glycosyltransferase 7 family. Requires Mn(2+) as cofactor. In terms of tissue distribution, expressed in male and female adults. Expressed in head.

It localises to the golgi apparatus membrane. It catalyses the reaction 3-O-(beta-D-xylosyl)-L-seryl-[protein] + UDP-alpha-D-galactose = 3-O-(beta-D-galactosyl-(1-&gt;4)-beta-D-xylosyl)-L-seryl-[protein] + UDP + H(+). It participates in protein modification; protein glycosylation. Functionally, transfers galactose from UDP-D-Galactose (UDP-Gal) to the acceptor xylose residue in the linkage tetrasaccharide region of the glycosaminoglycan side chain of proteoglycans. No activity towards beta-GlcNAc, beta-Glc, beta-Gal, and beta-GalNAc as acceptors. This Drosophila melanogaster (Fruit fly) protein is Beta-1,4-galactosyltransferase 7.